The sequence spans 756 residues: Probable cleavage and polyadenylation specificity factor subunit 2 (756 aa).

Phosphothreonine occurs at positions 221 and 226.

It belongs to the metallo-beta-lactamase superfamily. RNA-metabolizing metallo-beta-lactamase-like family. CPSF2/YSH1 subfamily. As to quaternary structure, component of the cleavage and polyadenylation specificity factor (CPSF) complex, composed of at least Clp, Cpsf73, Cpsf100 and Cpsf160. Interacts with Sym and Cpsf73 forming a core cleavage factor required for both polyadenylated and histone mRNA processing. Interacts with Slbp and Lsm11.

It localises to the nucleus. Its function is as follows. Component of the cleavage and polyadenylation specificity factor (CPSF) complex that plays a key role in pre-mRNA 3'-end formation, recognizing the AAUAAA signal sequence and interacting with poly(A) polymerase and other factors to bring about cleavage and poly(A) addition. Required for the cotranscriptional processing of 3'-ends of polyadenylated and histone pre-mRNA. The chain is Probable cleavage and polyadenylation specificity factor subunit 2 (Cpsf100) from Drosophila melanogaster (Fruit fly).